Here is a 295-residue protein sequence, read N- to C-terminus: ATP synthase gamma chain (295 aa).

This sequence belongs to the ATPase gamma chain family. As to quaternary structure, F-type ATPases have 2 components, CF(1) - the catalytic core - and CF(0) - the membrane proton channel. CF(1) has five subunits: alpha(3), beta(3), gamma(1), delta(1), epsilon(1). CF(0) has three main subunits: a, b and c.

The protein localises to the cell inner membrane. In terms of biological role, produces ATP from ADP in the presence of a proton gradient across the membrane. The gamma chain is believed to be important in regulating ATPase activity and the flow of protons through the CF(0) complex. This chain is ATP synthase gamma chain, found in Campylobacter concisus (strain 13826).